Reading from the N-terminus, the 677-residue chain is WD and tetratricopeptide repeats protein 1 (677 aa).

WD repeat units follow at residues 45–84 (GHSGCVNCLEWNEKGDLLASGSDDQHTIVWDPLHHKKLLS), 88–129 (GHTA…TIHM), 132–172 (DHTN…KHSE), 182–222 (GPMV…NHRK), and 265–305 (RLRV…RPYT). Ser352 carries the phosphoserine modification. TPR repeat units follow at residues 361–394 (LERVKQQANEAFACQQWTQAIQLYSQAVQKAPHN) and 396–431 (MLYGNRAAAYMKRKWDGDHYDALRDCLKAISLNPCH). Residues 489–509 (EEKKAAGGGGGPVRLRSTSRK) form a disordered region. Ser511 is subject to Phosphoserine. 2 WD repeats span residues 535-575 (NTTT…LVRV) and 578-617 (GDESIVNCLQPHPSYCFLATSGIDPVVRLWNPRPESEDLT). A disordered region spans residues 655 to 677 (SSGGAGASDDEDSAEGQVQCRPS).

It participates in protein modification; protein ubiquitination. Its function is as follows. May function as a substrate receptor for CUL4-DDB1 E3 ubiquitin-protein ligase complex. The sequence is that of WD and tetratricopeptide repeats protein 1 (Wdtc1) from Mus musculus (Mouse).